We begin with the raw amino-acid sequence, 473 residues long: Argininosuccinate lyase (473 aa).

This sequence belongs to the lyase 1 family. Argininosuccinate lyase subfamily.

The protein resides in the cytoplasm. The catalysed reaction is 2-(N(omega)-L-arginino)succinate = fumarate + L-arginine. It participates in amino-acid biosynthesis; L-arginine biosynthesis; L-arginine from L-ornithine and carbamoyl phosphate: step 3/3. The polypeptide is Argininosuccinate lyase (Nocardia farcinica (strain IFM 10152)).